A 306-amino-acid polypeptide reads, in one-letter code: MWFRNLLVYRLTQDLQLDADSLEKALGEKPARPCASQELTTYGFTAPFGKGPDAPLVHVSQDFFLISARKEERILPGSVVRDALKEKVDEIEAQQMRKVYKKERDQLKDEIVQTLLPRAFIRRSSTFAAIAPSLGLILVDSASAKKAEDLLSTLREALGSLPVRPLSVKVAPTATLTDWVKTQEAAGDFHVLDECELRDTHEDGGVVRCKRQDLTSEEIQLHLTAGKLVTQLSLAWSDKLSFVLDDKLAVKRLRFEDLLQEQAEKDGGEDALGQLDASFTLMMLTFAEFLPALFEALGGEEIPQGV.

This sequence belongs to the RdgC family.

The protein localises to the cytoplasm. It is found in the nucleoid. Functionally, may be involved in recombination. The protein is Recombination-associated protein RdgC of Pseudomonas aeruginosa (strain LESB58).